A 476-amino-acid chain; its full sequence is Glycogen synthase (476 aa).

Lysine 15 serves as a coordination point for ADP-alpha-D-glucose.

The protein belongs to the glycosyltransferase 1 family. Bacterial/plant glycogen synthase subfamily.

The enzyme catalyses [(1-&gt;4)-alpha-D-glucosyl](n) + ADP-alpha-D-glucose = [(1-&gt;4)-alpha-D-glucosyl](n+1) + ADP + H(+). It participates in glycan biosynthesis; glycogen biosynthesis. In terms of biological role, synthesizes alpha-1,4-glucan chains using ADP-glucose. The sequence is that of Glycogen synthase from Marinomonas sp. (strain MWYL1).